A 78-amino-acid chain; its full sequence is Large ribosomal subunit protein bL28 (78 aa).

The disordered stretch occupies residues 1 to 20; that stretch reads MSRVCQVTGKRPVTGNNRSH.

It belongs to the bacterial ribosomal protein bL28 family.

This Photobacterium profundum (strain SS9) protein is Large ribosomal subunit protein bL28.